The sequence spans 991 residues: Phosphate metabolism protein 7 (991 aa).

Residues 1–9 (MADSSSTSA) are Extracellular-facing. Residues 10–30 (FISTLIIYGLTAVVFVWLFLL) form a helical membrane-spanning segment. The Cytoplasmic portion of the chain corresponds to 31–91 (LRPKNRRVYE…TSVDGYFLLR (61 aa)). The chain crosses the membrane as a helical span at residues 92-112 (YIGIVGSLSFVGCLLLLPILL). Over 113–138 (PVNATNGNNLQGFELLSFSNVTNKNR) the chain is Extracellular. Residues Asn-115 and Asn-132 are each glycosylated (N-linked (GlcNAc...) asparagine). A helical membrane pass occupies residues 139-159 (FYAHVFLSWIFFGLFTYVIYK). Residues 160–388 (ELYYYVVFRH…ERHSRRAVAN (229 aa)) lie on the Cytoplasmic side of the membrane. Residues 389 to 409 (TIMVLLIIFWAFPVAVVGIIS) form a helical membrane-spanning segment. The Extracellular portion of the chain corresponds to 410–437 (NVNFLTDKVPFLRFINNMPTFLMGVITG). A helical membrane pass occupies residues 438-458 (LLPTIALVVLMSLVPPFIVML). Residues 459–471 (GKLSGCVTRQETD) are Cytoplasmic-facing. A helical transmembrane segment spans residues 472–492 (LYSQAWYYAFAVIQIFLVVTA). Over 493 to 523 (TSSASSTVDSIIDRPRSAMTLLANNLPKASN) the chain is Extracellular. A helical transmembrane segment spans residues 524 to 544 (FYIMYFILKGLTGPTWTILQA). Topologically, residues 545–582 (VNLLLSKVLGRVLDSTPRQKWNRYNTLATPRMGIVYPG) are cytoplasmic. The chain crosses the membrane as a helical span at residues 583–603 (IEILVCIYICYSIIAPILLFF). A topological domain (extracellular) is located at residue Ser-604. The chain crosses the membrane as a helical span at residues 605–625 (TVMLTLLYVAYLYNLNYVFGF). The Cytoplasmic portion of the chain corresponds to 626–637 (SFDLKGRNYPRA). The chain crosses the membrane as a helical span at residues 638 to 658 (LFQIFVGIYLSEVCLLGLFIM). The Extracellular segment spans residues 659-661 (AKT). The chain crosses the membrane as a helical span at residues 662–682 (WGPLVLEVFWIVVTALAHIYM). Residues 683–991 (KRKFIPLFDA…PPDYEPEAKK (309 aa)) are Cytoplasmic-facing. Residues 749–787 (KANLIPDNDGSSENGTPSNPFESGSERASLSGSNAESDS) form a disordered region. The span at 757–785 (DGSSENGTPSNPFESGSERASLSGSNAES) shows a compositional bias: polar residues.

The protein belongs to the CSC1 (TC 1.A.17) family.

The protein localises to the cell membrane. Functionally, acts as an osmosensitive calcium-permeable cation channel. This chain is Phosphate metabolism protein 7 (PHM7), found in Saccharomyces cerevisiae (strain ATCC 204508 / S288c) (Baker's yeast).